Here is a 248-residue protein sequence, read N- to C-terminus: MLFFNSILNDAPSSWALYFQDGASPSYLGVTHLNDYLMFYLTFIFIGVIYAICKAVIEYNYNSHPIAAKYTTHGSIVEFIWTLIPALILILVALPSFKLLYLLDEVQKPSMTVKAIGRQWFWTYELNDFVTNENEPVSFDSYMVPEEDLEEGSLRQLEVDNRLVLPIDTRIRLILTSGDVIHSWAVPSLGIKCDCIPGRLNQVSLSIDREGLFYGQCSELCGVLHSSMPIVVQGVSLEDFLAWLEENS.

Residues 1-36 (MLFFNSILNDAPSSWALYFQDGASPSYLGVTHLNDY) are Mitochondrial intermembrane-facing. Residues 37–57 (LMFYLTFIFIGVIYAICKAVI) form a helical membrane-spanning segment. Over 58-75 (EYNYNSHPIAAKYTTHGS) the chain is Mitochondrial matrix. Residues 76-100 (IVEFIWTLIPALILILVALPSFKLL) form a helical membrane-spanning segment. Residues 101-248 (YLLDEVQKPS…DFLAWLEENS (148 aa)) lie on the Mitochondrial intermembrane side of the membrane. Cu cation-binding residues include histidine 182, cysteine 217, glutamate 219, cysteine 221, histidine 225, and methionine 228. A Mg(2+)-binding site is contributed by glutamate 219.

This sequence belongs to the cytochrome c oxidase subunit 2 family. Component of the cytochrome c oxidase (complex IV, CIV), a multisubunit enzyme composed of a catalytic core of 3 subunits and several supernumerary subunits. The complex exists as a monomer or a dimer and forms supercomplexes (SCs) in the inner mitochondrial membrane with ubiquinol-cytochrome c oxidoreductase (cytochrome b-c1 complex, complex III, CIII). Cu cation is required as a cofactor.

It is found in the mitochondrion inner membrane. The catalysed reaction is 4 Fe(II)-[cytochrome c] + O2 + 8 H(+)(in) = 4 Fe(III)-[cytochrome c] + 2 H2O + 4 H(+)(out). Functionally, component of the cytochrome c oxidase, the last enzyme in the mitochondrial electron transport chain which drives oxidative phosphorylation. The respiratory chain contains 3 multisubunit complexes succinate dehydrogenase (complex II, CII), ubiquinol-cytochrome c oxidoreductase (cytochrome b-c1 complex, complex III, CIII) and cytochrome c oxidase (complex IV, CIV), that cooperate to transfer electrons derived from NADH and succinate to molecular oxygen, creating an electrochemical gradient over the inner membrane that drives transmembrane transport and the ATP synthase. Cytochrome c oxidase is the component of the respiratory chain that catalyzes the reduction of oxygen to water. Electrons originating from reduced cytochrome c in the intermembrane space (IMS) are transferred via the dinuclear copper A center (CU(A)) of subunit 2 and heme A of subunit 1 to the active site in subunit 1, a binuclear center (BNC) formed by heme A3 and copper B (CU(B)). The BNC reduces molecular oxygen to 2 water molecules using 4 electrons from cytochrome c in the IMS and 4 protons from the mitochondrial matrix. This Schizosaccharomyces pombe (strain 972 / ATCC 24843) (Fission yeast) protein is Cytochrome c oxidase subunit 2 (cox2).